Consider the following 157-residue polypeptide: Ribonuclease H (157 aa).

The RNase H type-1 domain maps to 2–145 (NAEISKIYTD…CDAIARAFAA (144 aa)). Asp11, Glu50, Asp74, and Asp137 together coordinate Mg(2+).

Belongs to the RNase H family. Monomer. The cofactor is Mg(2+).

The protein resides in the cytoplasm. It carries out the reaction Endonucleolytic cleavage to 5'-phosphomonoester.. Endonuclease that specifically degrades the RNA of RNA-DNA hybrids. This Cyanothece sp. (strain PCC 7425 / ATCC 29141) protein is Ribonuclease H.